The chain runs to 370 residues: Flagellar P-ring protein (370 aa).

An N-terminal signal peptide occupies residues 1 to 28 (MTFFTRCFRRGALLFLLAVLLLPSPAQA).

It belongs to the FlgI family. The basal body constitutes a major portion of the flagellar organelle and consists of four rings (L,P,S, and M) mounted on a central rod.

It is found in the periplasm. Its subcellular location is the bacterial flagellum basal body. Functionally, assembles around the rod to form the L-ring and probably protects the motor/basal body from shearing forces during rotation. The chain is Flagellar P-ring protein from Oleidesulfovibrio alaskensis (strain ATCC BAA-1058 / DSM 17464 / G20) (Desulfovibrio alaskensis).